We begin with the raw amino-acid sequence, 423 residues long: MAGRVKWVTDIEKSVLINNFEKRGWIQVTENEDWNFYWMSVQTIRNVFSVETGYRLSDDQIVNHFPNHYELTRKDLMVKNIKRYRKELEKEGSPLAEKDENGKYLYLDFVPVTYMLPADYNLFVEEFRKSPSSTWIMKPCGKAQGKGIFLINKLSQIKKWSRDSKTSSFVSQSTKEAYVISVYINNPLLIGGRKFDLRLYVLVSTYRPLRCYMYKLGFCRFCTVKYTPSTSELDNMFVHLTNVAIQKHGEDYNHIHGGKWTVNNLRLYLESTRGREVTSKLFDEIHWIIVQSLKAVAPVMNNDKHCFECYGYDIIIDDKLKPWLIEVNASPSLTSSTANDRILKYNLINDTLNIAVPNGEIPDCKWNKSPPKEVLGNYEILYDEELAQGDGAERELRNRPGQPVGPRAGRSRDSGRSVLTTWK.

The region spanning 1–367 (MAGRVKWVTD…NGEIPDCKWN (367 aa)) is the TTL domain. ATP contacts are provided by residues K138, 144–145 (QG), 181–184 (SVYI), and 194–196 (KFD). Residue Q144 participates in a protein binding. Residue R220 coordinates L-glutamate. 241–242 (TN) lines the ATP pocket. Residue K259 participates in L-glutamate binding. Mg(2+) contacts are provided by D313, E326, and N328. Position 344 (K344) interacts with L-glutamate. Residues 390 to 423 (DGAERELRNRPGQPVGPRAGRSRDSGRSVLTTWK) form a disordered region.

It belongs to the tubulin polyglutamylase family. In terms of assembly, part of the neuronal tubulin polyglutamylase complex which contains TPGS1, TPGS2, TTLL1, LRRC49 and NICN1. Interacts with PCM1, CSTPP1 and LRRC49. Mg(2+) is required as a cofactor. As to expression, highly expressed in brain, heart and kidney. Expressed in liver, lung, muscle, spleen, testis and trachea. In the brain, expressed in ependymal cilia, cortex, corpus callosum and striatum. Expressed in blastomere.

It localises to the cytoplasm. It is found in the cytoskeleton. Its subcellular location is the cilium basal body. The protein localises to the cilium axoneme. The protein resides in the cell projection. It localises to the cilium. It is found in the flagellum. The catalysed reaction is (L-glutamyl)(n)-gamma-L-glutamyl-L-glutamyl-[protein] + L-glutamate + ATP = (L-glutamyl)(n+1)-gamma-L-glutamyl-L-glutamyl-[protein] + ADP + phosphate + H(+). Catalytic subunit of a polyglutamylase complex which modifies tubulin, generating side chains of glutamate on the gamma-carboxyl group of specific glutamate residues within the C-terminal tail of tubulin. Probably involved in the side-chain elongation step of the polyglutamylation reaction rather than the initiation step. Modifies both alpha- and beta-tubulins with a preference for the alpha-tail. Unlike most polyglutamylases of the tubulin--tyrosine ligase family, only displays a catalytic activity when in complex with other proteins as it is most likely lacking domains important for autonomous activity. Part of the neuronal tubulin polyglutamylase complex. Mediates cilia and flagella polyglutamylation which is essential for their biogenesis and motility. Involved in respiratory motile cilia function through the regulation of beating asymmetry. Essential for sperm flagella biogenesis, motility and male fertility. Also mediates glutamylation of non-tubulin proteins. Involved in KLF4 glutamylation which impedes its ubiquitination, thereby leading to somatic cell reprogramming, pluripotency maintenance and embryogenesis. This Mus musculus (Mouse) protein is Polyglutamylase complex subunit TTLL1.